Reading from the N-terminus, the 674-residue chain is MAAAKVALTKRADPAELRTIFLKYASIEKNGEFFTSPNDFVTRYLNIFGESQPNPKTVELLSGVADQTKDGLISFQEFVAFESVLCAPDALFMVAFQLFDKAGKGEVTFEDVKQVFGQTTIHQHIPFNWDSEFVQLHFGKERKRHLTYAEFTQFLLEIQLEHAKQAFVQRDNASTGRVTAIDFRDIMVTIRPHVLTPFVEECLVAAAGGTTSHQVSFSYFNGFNSLLNNMELTRKIYSTLAGNRKDVEVTKEEFVLAAQKFGQVTPMEVDILFRLADLYEPRGRMTLADIERIAPLEEGTLPFNLAEAQRQKASGDSARPVLLQVAESAYRFGLGSVAGAVGATAVYPIDLVKTRMQNQRSTGSFVGELMYKNSFDCFKKVLRYEGFFGLYRGLLPQLLGVAPEKAIKLTVNDFVRDKFMHKDGSVPLAAEILAGGCAGGSQVIFTNPLEIVKIRLQVAGEITTGPRVSALSVVRDLGFFGIYKGAKACFLRDIPFSAIYFPCYAHARASFANEDGQVSPGSLLLAGAIAGMPAASLVTPADVIKTRLQVAARAGQTTYSGVIDCFKKILREEGPKALWKGAARVFRSSPQFGVTLLTYELLQRWFYIDFGGVKPMGSEPVPKSRINLPAPNPDHVGGYKLAVATFAGIENKFGLYLPLFKPSVPTSEAIGGGP.

Residue Ala2 is modified to N-acetylalanine. A regulatory N-terminal domain region spans residues 2 to 295 (AAAKVALTKR…TLADIERIAP (294 aa)). The Mitochondrial intermembrane portion of the chain corresponds to 2 to 331 (AAAKVALTKR…LLQVAESAYR (330 aa)). 4 consecutive EF-hand domains span residues 51–86 (SQPNPKTVELLSGVADQTKDGLISFQEFVAFESVLC), 87–122 (APDALFMVAFQLFDKAGKGEVTFEDVKQVFGQTTIH), 123–157 (QHIPFNWDSEFVQLHFGKERKRHLTYAEFTQFLLE), and 158–193 (IQLEHAKQAFVQRDNASTGRVTAIDFRDIMVTIRPH). 5 residues coordinate Ca(2+): Asp66, Thr68, Asp70, Leu72, and Glu77. Residues 296–311 (LEEGTLPFNLAEAQRQ) are linker loop domain. The interval 321–611 (VLLQVAESAY…LQRWFYIDFG (291 aa)) is carrier domain. Solcar repeat units follow at residues 326–418 (AESA…VRDK), 426–510 (VPLA…ARAS), and 518–605 (VSPG…LQRW). The helical transmembrane segment at 332-349 (FGLGSVAGAVGATAVYPI) threads the bilayer. Topologically, residues 350-392 (DLVKTRMQNQRSTGSFVGELMYKNSFDCFKKVLRYEGFFGLYR) are mitochondrial matrix. Residues Lys353 and Lys372 each carry the N6-acetyllysine modification. Residues 393–412 (GLLPQLLGVAPEKAIKLTVN) form a helical membrane-spanning segment. Residues 413–435 (DFVRDKFMHKDGSVPLAAEILAG) lie on the Mitochondrial intermembrane side of the membrane. The chain crosses the membrane as a helical span at residues 436 to 449 (GCAGGSQVIFTNPL). Over 450–484 (EIVKIRLQVAGEITTGPRVSALSVVRDLGFFGIYK) the chain is Mitochondrial matrix. Lys453 bears the N6-methyllysine mark. At Lys484 the chain carries N6-acetyllysine; alternate. Lys484 carries the post-translational modification N6-succinyllysine; alternate. A helical transmembrane segment spans residues 485-504 (GAKACFLRDIPFSAIYFPCY). At 505-523 (AHARASFANEDGQVSPGSL) the chain is on the mitochondrial intermembrane side. Residues 524–541 (LLAGAIAGMPAASLVTPA) form a helical membrane-spanning segment. Topologically, residues 542–580 (DVIKTRLQVAARAGQTTYSGVIDCFKKILREEGPKALWK) are mitochondrial matrix. N6-succinyllysine is present on Lys580. The chain crosses the membrane as a helical span at residues 581–599 (GAARVFRSSPQFGVTLLTY). At 600-674 (ELLQRWFYID…PTSEAIGGGP (75 aa)) the chain is on the mitochondrial intermembrane side. The tract at residues 612-674 (GVKPMGSEPV…PTSEAIGGGP (63 aa)) is C-terminal domain. Lys661 bears the N6-acetyllysine mark.

The protein belongs to the mitochondrial carrier (TC 2.A.29) family. As to quaternary structure, homodimer (via N-terminus).

It is found in the mitochondrion inner membrane. The catalysed reaction is L-aspartate(in) + L-glutamate(out) + H(+)(out) = L-aspartate(out) + L-glutamate(in) + H(+)(in). The enzyme catalyses 3-sulfino-L-alanine(out) + L-glutamate(in) + H(+)(in) = 3-sulfino-L-alanine(in) + L-glutamate(out) + H(+)(out). It catalyses the reaction 3-sulfino-L-alanine(out) + L-aspartate(in) = 3-sulfino-L-alanine(in) + L-aspartate(out). In terms of biological role, mitochondrial electrogenic aspartate/glutamate antiporter that favors efflux of aspartate and entry of glutamate and proton within the mitochondria as part of the malate-aspartate shuttle. Also mediates the uptake of L-cysteinesulfinate (3-sulfino-L-alanine) by mitochondria in exchange of L-glutamate and proton. Can also exchange L-cysteinesulfinate with aspartate in their anionic form without any proton translocation. Lacks transport activity towards gamma-aminobutyric acid (GABA). The chain is Electrogenic aspartate/glutamate antiporter SLC25A13, mitochondrial from Macaca fascicularis (Crab-eating macaque).